Consider the following 504-residue polypeptide: NADH-quinone oxidoreductase subunit N (504 aa).

Transmembrane regions (helical) follow at residues 9 to 29 (IALL…LSII), 38 to 58 (AVLT…HMMW), 78 to 98 (VLYV…GYVW), 114 to 134 (LLIA…IVLF), 135 to 155 (LGIE…VFSK), 164 to 184 (YIIL…FIYC), 216 to 236 (IVIG…CVPF), 254 to 274 (YLAT…LLIL), 282 to 302 (LHIF…LMAI), 309 to 329 (RMLA…LIAL), 341 to 361 (ISVY…IVNI), 392 to 412 (VIFV…GFIG), 425 to 447 (LWFL…LKII), and 476 to 496 (FMVI…QFIV).

The protein belongs to the complex I subunit 2 family. In terms of assembly, NDH-1 is composed of 13 different subunits. Subunits NuoA, H, J, K, L, M, N constitute the membrane sector of the complex.

The protein resides in the cell inner membrane. It carries out the reaction a quinone + NADH + 5 H(+)(in) = a quinol + NAD(+) + 4 H(+)(out). Its function is as follows. NDH-1 shuttles electrons from NADH, via FMN and iron-sulfur (Fe-S) centers, to quinones in the respiratory chain. The immediate electron acceptor for the enzyme in this species is believed to be ubiquinone. Couples the redox reaction to proton translocation (for every two electrons transferred, four hydrogen ions are translocated across the cytoplasmic membrane), and thus conserves the redox energy in a proton gradient. The protein is NADH-quinone oxidoreductase subunit N of Blochmanniella floridana.